The primary structure comprises 88 residues: UPF0297 protein BT9727_4120 (88 aa).

Belongs to the UPF0297 family.

This is UPF0297 protein BT9727_4120 from Bacillus thuringiensis subsp. konkukian (strain 97-27).